We begin with the raw amino-acid sequence, 79 residues long: Conotoxin ArMKLT2-031 (79 aa).

The first 22 residues, 1-22 (MKLTCVLIIAVLFLTACQLTTG), serve as a signal peptide directing secretion. A propeptide spanning residues 23-46 (ETYSRGEQKDHALRSTDKNSKLTR) is cleaved from the precursor. Gln-47 is subject to Pyrrolidone carboxylic acid. 3 disulfide bridges follow: Cys-48-Cys-62, Cys-55-Cys-66, and Cys-61-Cys-73.

The protein belongs to the conotoxin O1 superfamily. In terms of tissue distribution, expressed by the venom duct.

It localises to the secreted. The polypeptide is Conotoxin ArMKLT2-031 (Conus arenatus (Sand-dusted cone)).